The chain runs to 2878 residues: Trinucleotide repeat-containing gene 18 protein (2878 aa).

Disordered regions lie at residues 1–54 (MDGR…KYMA) and 102–194 (TQKD…SSRL). Over residues 119-128 (TPSSRTPSGH) the composition is skewed to polar residues. 3 stretches are compositionally biased toward basic and acidic residues: residues 137 to 149 (SSREGTGKDRAGR), 158 to 169 (GKKDPRAREEVS), and 179 to 194 (QEARAEGRQDRGSSRL). At Ser199 the chain carries Phosphoserine. 12 disordered regions span residues 259-289 (ARPCGSPLPPPPPLPPKGPPAPPSSTPAGVY), 313-442 (FDER…KWKP), 487-507 (MPRASATCGRPGADLHSAAHG), 540-655 (SPFG…DDEC), 865-1002 (AQEH…ALFT), 1033-1104 (ADGL…LESP), 1127-1146 (LEAQALSTAGPGCREPSEVS), 1171-1228 (LGTQ…DCDL), 1429-1535 (ELVK…DSSS), 1613-1668 (LGLS…DEDE), 1694-1718 (VPKNSKPATGPKLTKRGLAGPRTLK), and 1737-1787 (EARS…GEQA). Residues 264-283 (SPLPPPPPLPPKGPPAPPSS) show a composition bias toward pro residues. Basic and acidic residues-rich tracts occupy residues 327-337 (RDVRAREREPG) and 350-362 (RLERPEVLREKSS). Residues 376–390 (PPAARSSRSSPDARA) are compositionally biased toward low complexity. Residues 396 to 411 (ELLKPEADPRPCERAP) are compositionally biased toward basic and acidic residues. At Ser540 the chain carries Phosphoserine. Lys549 participates in a covalent cross-link: Glycyl lysine isopeptide (Lys-Gly) (interchain with G-Cter in SUMO2). Basic and acidic residues-rich tracts occupy residues 580–589 (LKRDPERPES) and 865–881 (AQEHRTEMEEKISKRSL). Pro residues predominate over residues 958-969 (SSPPPASPPPTP). The span at 972–993 (TRKEEAPENVVEKKDLELEKET) shows a compositional bias: basic and acidic residues. A phosphoserine mark is found at Ser1053 and Ser1062. Positions 1068–1088 (EPPRDSPEEEQLADREVKAEV) are enriched in basic and acidic residues. Positions 1410 to 1442 (LDFRMRLAEVQRRYKEKQRELVKLQRRRDSGDR) form a coiled coil. Positions 1429 to 1448 (ELVKLQRRRDSGDRHEDAHR) are enriched in basic and acidic residues. The span at 1449–1463 (SLARRGPGRPRKRTH) shows a compositional bias: basic residues. A Phosphoserine modification is found at Ser1469. Residues 1478–1492 (SSSGKGLSSKSLLTS) are compositionally biased toward low complexity. Residues 1745-1775 (SSEEDSFDQDDSSEEEEEELEEEEEDEEEEG) are compositionally biased toward acidic residues. Phosphoserine occurs at positions 1789 and 1795. Residues 1825 to 1835 (EQKARKKEERQ) are compositionally biased toward basic and acidic residues. Disordered stretches follow at residues 1825–2040 (EQKA…GAVS), 2052–2080 (FEANQDSSFSEDEHLPRGGATERPLTPAP), and 2226–2681 (LLVP…RLPS). Over residues 1876–1890 (AAPGPGSRASGPSSP) the composition is skewed to low complexity. Basic and acidic residues-rich tracts occupy residues 1891–1900 (DKAKLVSEKG), 1925–1936 (LWTRRRSERIFL), 1966–1978 (PRKDTGRAKDRKD), and 2024–2034 (RGKEAKKENRG). Thr2077 carries the phosphothreonine modification. Over residues 2238 to 2247 (TSKDTGEVKE) the composition is skewed to basic and acidic residues. Residues 2261-2270 (ARGRGRKPST) are compositionally biased toward basic residues. Basic and acidic residues-rich tracts occupy residues 2307-2316 (STPEPVDKRA) and 2409-2419 (AKEALLLREDP). Composition is skewed to low complexity over residues 2460 to 2470 (EPGPGLPLEDP), 2491 to 2520 (TTSSSSSSSSSSSSSSSSSSSSSSSSSGSE), and 2540 to 2578 (RTCSAASSRASSPASSSSSSSSSSSSSSSSSSSSSSSST). A compositionally biased stretch (acidic residues) spans 2579 to 2591 (TDEDSSCSSDEEA). Pro residues predominate over residues 2631–2641 (TQPPPQPPPQP). Ser2681 carries the post-translational modification Phosphoserine. One can recognise a BAH domain in the interval 2727-2872 (EMIRIGDCAV…PTTGMIFSTD (146 aa)).

The protein is Trinucleotide repeat-containing gene 18 protein (Tnrc18) of Mus musculus (Mouse).